Consider the following 346-residue polypeptide: Ephrin-B1 (346 aa).

The N-terminal stretch at 1–27 (MARPGQRWLGKWLVAMVVWALCRLATP) is a signal peptide. At 28–237 (LAKNLEPVSW…GDPDGFFNSK (210 aa)) the chain is on the extracellular side. In terms of domain architecture, Ephrin RBD spans 30–164 (KNLEPVSWSS…TRTMKIIMKV (135 aa)). Intrachain disulfides connect Cys-64/Cys-101 and Cys-89/Cys-153. Asn-139 is a glycosylation site (N-linked (GlcNAc...) asparagine). The tract at residues 169 to 228 (NAVTPEQLTTSRPSKEADNTVKMATQAPGSRGSLGDSDGKHETVNQEEKSGPGASGGSSG) is disordered. Positions 205 to 218 (SDGKHETVNQEEKS) are enriched in basic and acidic residues. Residues 238 to 258 (VALFAAVGAGCVIFLLIIIFL) traverse the membrane as a helical segment. Topologically, residues 259–346 (TVLLLKLRKR…QSPANIYYKV (88 aa)) are cytoplasmic. Positions 260–273 (VLLLKLRKRHRKHT) match the Nuclear localization signal motif. Residues 263–294 (LKLRKRHRKHTQQRAAALSLSTLASPKGGSGT) form an interaction with ZHX2 region. Phosphoserine occurs at positions 281 and 287. The PDZ-binding motif lies at 344–346 (YKV).

It belongs to the ephrin family. In terms of assembly, interacts (via PDZ-binding motif) with GRIP1 and GRIP2 (via PDZ domain 6). Interacts with TLE1. The intracellular domain peptide interacts with ZHX2; the interaction enhances ZHX2 transcriptional repression activity. Post-translationally, inducible phosphorylation of tyrosine residues in the cytoplasmic domain. In terms of processing, proteolytically processed. The ectodomain is cleaved, probably by a metalloprotease, to produce a membrane-tethered C-terminal fragment. This fragment is then further processed by the gamma-secretase complex to yield a soluble intracellular domain peptide which can translocate to the nucleus. The intracellular domain peptide is highly labile suggesting that it is targeted for degradation by the proteasome. Widely expressed. Detected in both neuronal and non-neuronal tissues. Seems to have particularly strong expression in retina, sciatic nerve, heart and spinal cord.

The protein resides in the cell membrane. It localises to the membrane raft. The protein localises to the nucleus. Functionally, cell surface transmembrane ligand for Eph receptors, a family of receptor tyrosine kinases which are crucial for migration, repulsion and adhesion during neuronal, vascular and epithelial development. Binding to Eph receptors residing on adjacent cells leads to contact-dependent bidirectional signaling into neighboring cells. Shows high affinity for the receptor tyrosine kinase EPHB1/ELK. Can also bind EPHB2 and EPHB3. Binds to, and induces collapse of, commissural axons/growth cones in vitro. May play a role in constraining the orientation of longitudinally projecting axons. In Homo sapiens (Human), this protein is Ephrin-B1 (EFNB1).